The sequence spans 239 residues: Sugar fermentation stimulation protein homolog (239 aa).

This sequence belongs to the SfsA family.

This Synechococcus sp. (strain JA-3-3Ab) (Cyanobacteria bacterium Yellowstone A-Prime) protein is Sugar fermentation stimulation protein homolog.